Consider the following 777-residue polypeptide: Shutoff protein (777 aa).

Disordered stretches follow at residues 1 to 55 (MEED…SVPV) and 261 to 283 (PLDS…DDDL). The span at 9 to 20 (QPDSETLTSPTS) shows a compositional bias: polar residues. A binding to host EIF4G region spans residues 250-314 (VMDHLLIKRV…VILVTVELEC (65 aa)). Positions 317–435 (RFFANPQTLR…ELWTAFSERT (119 aa)) constitute an RRM domain. Residues tyrosine 334 and tyrosine 649 each carry the phosphotyrosine; by host modification. The interval 652-777 (PQTGEELNTP…AAARLVESQP (126 aa)) is disordered. The span at 656–665 (EELNTPSPSA) shows a compositional bias: polar residues. Positions 728–738 (GAGGQTPQGRG) are enriched in gly residues. Over residues 753–763 (TRSEPASDGES) the composition is skewed to basic and acidic residues.

Belongs to the adenoviridae shutoff protein family. In terms of assembly, monomer. Interacts with hexon protein; this interaction allows chaperoning and trimerization of hexon proteins. Interacts (via N-terminus) with host initiation factor EIF4G (via C-terminus). Interacts (via RRM domain) with viral mRNAs that contain the tripartite leader; this interaction allows ribosome shunting and expression of viral late mRNAs. In terms of processing, might be cleaved by the viral protease. Phosphorylated. Tyrosine phosphorylation enhances preferential binding to tripartite leader mRNAs and allows ribosome shunting. Post-translationally, methylated. Asymmetric dimethylation by host PRMT1 of the Arg/Gly-rich region may regulate shutoff protein binding to hexon and promote the capsid assembly in the nucleus.

The protein resides in the host cytoplasm. Its function is as follows. Protein that inhibits host translation while promoting late viral translation by ribosome shunting. Blocks host cap-dependent translation by binding to eIF4G, displacing MKNK1 from cap initiation complexes and preventing EIF4E phosphorylation. Binds to the tripartite leader sequence of viral late mRNAs and recruits host eIF4G, PABPC1/poly-A binding protein and 40S ribosomes subunits on viral mRNAs, allowing ribosome shunting and efficient translation of late viral mRNAs even though conventional translation via ribosome scanning from the cap has been shut off in the host cell. During assembly, acts as a chaperone protein that helps hexon proteins assembly into trimers. This is Shutoff protein from Homo sapiens (Human).